Reading from the N-terminus, the 679-residue chain is DNA-directed RNA polymerase subunit beta' (679 aa).

The Zn(2+) site is built by Cys-69, Cys-71, Cys-87, and Cys-90. 3 residues coordinate Mg(2+): Asp-489, Asp-491, and Asp-493.

Belongs to the RNA polymerase beta' chain family. RpoC1 subfamily. As to quaternary structure, in plastids the minimal PEP RNA polymerase catalytic core is composed of four subunits: alpha, beta, beta', and beta''. When a (nuclear-encoded) sigma factor is associated with the core the holoenzyme is formed, which can initiate transcription. Requires Mg(2+) as cofactor. The cofactor is Zn(2+).

The protein resides in the plastid. Its subcellular location is the chloroplast. It carries out the reaction RNA(n) + a ribonucleoside 5'-triphosphate = RNA(n+1) + diphosphate. Functionally, DNA-dependent RNA polymerase catalyzes the transcription of DNA into RNA using the four ribonucleoside triphosphates as substrates. The protein is DNA-directed RNA polymerase subunit beta' of Oenothera argillicola (Appalachian evening primrose).